The following is a 212-amino-acid chain: FMN-dependent NADH:quinone oxidoreductase (212 aa).

FMN contacts are provided by residues Ser-10 and 17–19 (SFS).

Belongs to the azoreductase type 1 family. As to quaternary structure, homodimer. Requires FMN as cofactor.

It carries out the reaction 2 a quinone + NADH + H(+) = 2 a 1,4-benzosemiquinone + NAD(+). It catalyses the reaction N,N-dimethyl-1,4-phenylenediamine + anthranilate + 2 NAD(+) = 2-(4-dimethylaminophenyl)diazenylbenzoate + 2 NADH + 2 H(+). Quinone reductase that provides resistance to thiol-specific stress caused by electrophilic quinones. Functionally, also exhibits azoreductase activity. Catalyzes the reductive cleavage of the azo bond in aromatic azo compounds to the corresponding amines. The polypeptide is FMN-dependent NADH:quinone oxidoreductase (Malacoplasma penetrans (strain HF-2) (Mycoplasma penetrans)).